A 386-amino-acid polypeptide reads, in one-letter code: Bifunctional enzyme IspD/IspF (386 aa).

A 2-C-methyl-D-erythritol 4-phosphate cytidylyltransferase region spans residues 1–231 (MKNGAVIIPA…REKKEPMQKI (231 aa)). The segment at 232 to 386 (RIGHGFDAHQ…SCHAVVLLQQ (155 aa)) is 2-C-methyl-D-erythritol 2,4-cyclodiphosphate synthase. Residues Asp-238 and His-240 each contribute to the a divalent metal cation site. 4-CDP-2-C-methyl-D-erythritol 2-phosphate is bound by residues 238–240 (DAH) and 264–265 (HS). His-272 is an a divalent metal cation binding site. 4-CDP-2-C-methyl-D-erythritol 2-phosphate-binding positions include 286–288 (DIG), 362–365 (TTTE), Tyr-369, and Arg-372.

This sequence in the N-terminal section; belongs to the IspD/TarI cytidylyltransferase family. IspD subfamily. It in the C-terminal section; belongs to the IspF family. Requires a divalent metal cation as cofactor.

The enzyme catalyses 2-C-methyl-D-erythritol 4-phosphate + CTP + H(+) = 4-CDP-2-C-methyl-D-erythritol + diphosphate. It catalyses the reaction 4-CDP-2-C-methyl-D-erythritol 2-phosphate = 2-C-methyl-D-erythritol 2,4-cyclic diphosphate + CMP. It participates in isoprenoid biosynthesis; isopentenyl diphosphate biosynthesis via DXP pathway; isopentenyl diphosphate from 1-deoxy-D-xylulose 5-phosphate: step 2/6. It functions in the pathway isoprenoid biosynthesis; isopentenyl diphosphate biosynthesis via DXP pathway; isopentenyl diphosphate from 1-deoxy-D-xylulose 5-phosphate: step 4/6. Functionally, bifunctional enzyme that catalyzes the formation of 4-diphosphocytidyl-2-C-methyl-D-erythritol from CTP and 2-C-methyl-D-erythritol 4-phosphate (MEP) (IspD), and catalyzes the conversion of 4-diphosphocytidyl-2-C-methyl-D-erythritol 2-phosphate (CDP-ME2P) to 2-C-methyl-D-erythritol 2,4-cyclodiphosphate (ME-CPP) with a corresponding release of cytidine 5-monophosphate (CMP) (IspF). The polypeptide is Bifunctional enzyme IspD/IspF (Desulfotalea psychrophila (strain LSv54 / DSM 12343)).